Here is a 1050-residue protein sequence, read N- to C-terminus: Calmodulin-binding transcription activator 2 (1050 aa).

Residues 15-141 (IKQLLSEAQH…YLEVKGNRMS (127 aa)) constitute a DNA-binding region (CG-1). Polar residues-rich tracts occupy residues 141 to 171 (STSG…SSIL) and 183 to 196 (SRQA…NPEP). 2 disordered regions span residues 141 to 196 (STSG…NPEP) and 223 to 246 (NRDG…SGDV). ANK repeat units follow at residues 661-690 (DGQG…SINF) and 694-723 (NGWS…DAGA). IQ domains are found at residues 870-899 (VHAA…RIVK) and 893-922 (IRQR…SVGL). The segment at 918-940 (WSVGLLEKIILRWRRKGSGLRGF) is calmodulin-binding. Positions 957–985 (QEDDYDFLKEGRKQTEERLQKALTRVKSM) form a coiled coil. Ser-984 carries the phosphoserine modification.

It belongs to the CAMTA family. In terms of tissue distribution, expressed in roots, stems, old leaves, petals, sepals, top of carpels, stigmas, stamen filaments, anthers and siliques, but not in pollen.

It localises to the nucleus. In terms of biological role, transcription activator that binds to the DNA consensus sequence 5'-[ACG]CGCG[GTC]-3'. Regulates transcriptional activity in response to calcium signals. Binds calmodulin in a calcium-dependent manner. Involved in freezing tolerance in association with CAMTA1 and CAMTA3. Contributes together with CAMTA1 and CAMTA3 to the positive regulation of the cold-induced expression of DREB1A/CBF3, DREB1B/CBF1 and DREB1C/CBF2. Involved together with CAMTA3 and CAMTA4 in the positive regulation of a general stress response. Involved in tolerance to aluminum. Binds to the promoter of ALMT1 transporter and contributes to the positive regulation of aluminum-induced expression of ALMT1. This Arabidopsis thaliana (Mouse-ear cress) protein is Calmodulin-binding transcription activator 2.